The chain runs to 276 residues: Transcriptional antiactivator ExsD (276 aa).

In terms of assembly, can form homotrimer. Interacts with ExsA; this interaction inhibits ExsA activity. Interacts with ExsC; this interaction dissociates the ExsD-ExsA complex.

Negative regulator of the type III secretion system regulon. Acts by disrupting transcriptional activator ExsA self-association and DNA-binding activity in absence of inducing signals. Upon host cell contact, this interaction is disrupted by the anti-antiactivator protein ExsC leading to ExsA activation. The chain is Transcriptional antiactivator ExsD (exsD) from Pseudomonas aeruginosa (strain ATCC 15692 / DSM 22644 / CIP 104116 / JCM 14847 / LMG 12228 / 1C / PRS 101 / PAO1).